Consider the following 382-residue polypeptide: MTEQRPLTIALVAGETSGDILGAGLIRALKERVPNARFVGVAGPRMQAEGCEAWYEMEELAVMGIVEVLGRLRRLLHIRADLTKRFGELKPDVFVGIDAPDFNITLEGNLKKQGIKTIHYVSPSVWAWRQKRVFKIGRATDLVLAFLPFEKAFYDKYNVPCRFIGHTMADAMPLDPDKNAARDVLGIPHDAHCLALLPGSRGAEVEMLSADFLKTAQLLRQTYPDLEIVVPLVNAKRREQFERIKAEVAPDLSVHLLDGMGREAMVASDAALLASGTAALECMLAKCPMVVGYRMKPFTFWLAKRLVKTDYVSLPNLLAGRELVKELLQEECEPQKLAAALLPLLANGKTSHAMHDTFRELHQQIRCNADEQAAQAVLELAQ.

The protein belongs to the LpxB family.

It carries out the reaction 2-N,3-O-bis[(3R)-3-hydroxytetradecanoyl]-alpha-D-glucosaminyl 1-phosphate + UDP-2-N,3-O-bis[(3R)-3-hydroxytetradecanoyl]-alpha-D-glucosamine = lipid A disaccharide (E. coli) + UDP + H(+). It catalyses the reaction a lipid X + a UDP-2-N,3-O-bis[(3R)-3-hydroxyacyl]-alpha-D-glucosamine = a lipid A disaccharide + UDP + H(+). It participates in glycolipid biosynthesis; lipid IV(A) biosynthesis; lipid IV(A) from (3R)-3-hydroxytetradecanoyl-[acyl-carrier-protein] and UDP-N-acetyl-alpha-D-glucosamine: step 5/6. Functionally, condensation of UDP-2,3-diacylglucosamine and 2,3-diacylglucosamine-1-phosphate to form lipid A disaccharide, a precursor of lipid A, a phosphorylated glycolipid that anchors the lipopolysaccharide to the outer membrane of the cell. This is Lipid-A-disaccharide synthase from Escherichia coli (strain 55989 / EAEC).